The sequence spans 183 residues: Outer membrane protein H.8 (183 aa).

The signal sequence occupies residues 1-17 (MKAYLALISAAVIGLAA). The N-palmitoyl cysteine moiety is linked to residue Cys18. Residue Cys18 is the site of S-diacylglycerol cysteine attachment. Residues 27-51 (AEATPAGEAPASEAPAAEAAPADAA) form a disordered region. Residues 57-183 (GNCAATVESN…LMNGKVTLVD (127 aa)) form the Plastocyanin-like domain. Positions 102, 166, 171, and 175 each coordinate Cu cation.

Cu cation is required as a cofactor.

It localises to the cell outer membrane. This Neisseria gonorrhoeae protein is Outer membrane protein H.8.